The sequence spans 62 residues: MFTLKKSLLLLFFLGTISLSLCEQERGADEEENGGEVTEEEVKRNILSGIANGINRVLSWFG.

A signal peptide spans 1-22; that stretch reads MFTLKKSLLLLFFLGTISLSLC. A propeptide spans 23–42 (removed in mature form); sequence EQERGADEEENGGEVTEEEV.

It belongs to the frog skin active peptide (FSAP) family. Brevinin subfamily. Expressed by the skin glands.

Its subcellular location is the secreted. In terms of biological role, antimicrobial peptide. Active against a variety of Gram-negative and Gram-positive bacterial strains. Not active against fungi. Shows weak hemolytic activity against human erythrocytes. The protein is Amolopin-p-MT1 of Amolops mantzorum (Sichuan torrent frog).